The chain runs to 338 residues: tRNA N6-adenosine threonylcarbamoyltransferase (338 aa).

2 residues coordinate Fe cation: His-111 and His-115. Residues 134-138, Asp-167, Gly-180, and Asn-272 contribute to the substrate site; that span reads LVSGG. A Fe cation-binding site is contributed by Asp-300.

This sequence belongs to the KAE1 / TsaD family. Requires Fe(2+) as cofactor.

The protein resides in the cytoplasm. The enzyme catalyses L-threonylcarbamoyladenylate + adenosine(37) in tRNA = N(6)-L-threonylcarbamoyladenosine(37) in tRNA + AMP + H(+). In terms of biological role, required for the formation of a threonylcarbamoyl group on adenosine at position 37 (t(6)A37) in tRNAs that read codons beginning with adenine. Is involved in the transfer of the threonylcarbamoyl moiety of threonylcarbamoyl-AMP (TC-AMP) to the N6 group of A37, together with TsaE and TsaB. TsaD likely plays a direct catalytic role in this reaction. This chain is tRNA N6-adenosine threonylcarbamoyltransferase, found in Shewanella pealeana (strain ATCC 700345 / ANG-SQ1).